An 85-amino-acid polypeptide reads, in one-letter code: Putative membrane protein insertion efficiency factor (85 aa).

This sequence belongs to the UPF0161 family.

The protein localises to the cell membrane. In terms of biological role, could be involved in insertion of integral membrane proteins into the membrane. Functionally, lyses fish blood cells. The sequence is that of Putative membrane protein insertion efficiency factor (hlyA) from Aeromonas hydrophila.